A 35-amino-acid polypeptide reads, in one-letter code: Pheromone-binding protein (35 aa).

The protein belongs to the PBP/GOBP family. As to expression, antenna.

This major soluble protein in olfactory sensilla of male moths might serve to solubilize the extremely hydrophobic pheromone molecules and to transport pheromone through the aqueous lymph to receptors located on olfactory cilia. The chain is Pheromone-binding protein from Hyalophora cecropia (Cecropia moth).